The sequence spans 398 residues: S-adenosylmethionine synthase (398 aa).

Residue 136–141 (GTGSSD) coordinates ATP.

Belongs to the AdoMet synthase 2 family. Requires Mg(2+) as cofactor.

The enzyme catalyses L-methionine + ATP + H2O = S-adenosyl-L-methionine + phosphate + diphosphate. It participates in amino-acid biosynthesis; S-adenosyl-L-methionine biosynthesis; S-adenosyl-L-methionine from L-methionine: step 1/1. Functionally, catalyzes the formation of S-adenosylmethionine from methionine and ATP. In Methanosarcina barkeri (strain Fusaro / DSM 804), this protein is S-adenosylmethionine synthase.